The chain runs to 263 residues: Oxidoreductase UcpA (263 aa).

10 to 32 (LITGALQGIGEGIARTFARHGAN) is an NAD(+) binding site. S141 contacts substrate. The active-site Proton acceptor is the Y155.

The protein belongs to the short-chain dehydrogenases/reductases (SDR) family.

The protein is Oxidoreductase UcpA (ucpA) of Escherichia coli (strain K12).